Here is a 483-residue protein sequence, read N- to C-terminus: ATP synthase subunit beta (483 aa).

Residue 162 to 169 (GGAGVGKT) coordinates ATP.

The protein belongs to the ATPase alpha/beta chains family. As to quaternary structure, F-type ATPases have 2 components, CF(1) - the catalytic core - and CF(0) - the membrane proton channel. CF(1) has five subunits: alpha(3), beta(3), gamma(1), delta(1), epsilon(1). CF(0) has four main subunits: a(1), b(1), b'(1) and c(9-12).

Its subcellular location is the cellular thylakoid membrane. It catalyses the reaction ATP + H2O + 4 H(+)(in) = ADP + phosphate + 5 H(+)(out). Its function is as follows. Produces ATP from ADP in the presence of a proton gradient across the membrane. The catalytic sites are hosted primarily by the beta subunits. The sequence is that of ATP synthase subunit beta from Rippkaea orientalis (strain PCC 8801 / RF-1) (Cyanothece sp. (strain PCC 8801)).